The sequence spans 140 residues: Large ribosomal subunit protein uL11 (140 aa).

This sequence belongs to the universal ribosomal protein uL11 family. As to quaternary structure, part of the ribosomal stalk of the 50S ribosomal subunit. Interacts with L10 and the large rRNA to form the base of the stalk. L10 forms an elongated spine to which L12 dimers bind in a sequential fashion forming a multimeric L10(L12)X complex. Post-translationally, one or more lysine residues are methylated.

Its function is as follows. Forms part of the ribosomal stalk which helps the ribosome interact with GTP-bound translation factors. This is Large ribosomal subunit protein uL11 from Solidesulfovibrio magneticus (strain ATCC 700980 / DSM 13731 / RS-1) (Desulfovibrio magneticus).